Reading from the N-terminus, the 132-residue chain is L-ectoine synthase (132 aa).

It belongs to the ectoine synthase family.

The enzyme catalyses (2S)-4-acetamido-2-aminobutanoate = L-ectoine + H2O. The protein operates within amine and polyamine biosynthesis; ectoine biosynthesis; L-ectoine from L-aspartate 4-semialdehyde: step 3/3. Its function is as follows. Catalyzes the circularization of gamma-N-acetyl-alpha,gamma-diaminobutyric acid (ADABA) to ectoine (1,4,5,6-tetrahydro-2-methyl-4-pyrimidine carboxylic acid), which is an excellent osmoprotectant. This Alkalilimnicola ehrlichii (strain ATCC BAA-1101 / DSM 17681 / MLHE-1) protein is L-ectoine synthase.